We begin with the raw amino-acid sequence, 957 residues long: Melanoma-associated antigen E1 (957 aa).

Positions 1 to 455 (MSLVSQNSRR…DSEGPKGAEG (455 aa)) are disordered. Polar residues-rich tracts occupy residues 85 to 96 (SEASSASGQPTI) and 104 to 130 (VLPT…SVTL). Low complexity predominate over residues 138-162 (TSRPPTSSEEPSTSVPPTASEVPST). 5 stretches are compositionally biased toward polar residues: residues 219-244 (GLST…TEGL), 268-320 (PSTS…STSV), 329-344 (STSV…STSV), 364-380 (LSTS…DTSV), and 414-428 (TLFS…NPSK). 2 MAGE domains span residues 491-690 (MEQN…YNEA) and 745-936 (LESK…YREA). An interaction with DTNA region spans residues 743–957 (SRLESKARKL…HRQIFVHNFR (215 aa)).

As to quaternary structure, interacts with DTNA. Interacts with TRIM28.

Its subcellular location is the cytoplasm. The protein localises to the perinuclear region. It localises to the nucleus. It is found in the cell membrane. May enhance ubiquitin ligase activity of RING-type zinc finger-containing E3 ubiquitin-protein ligases. Proposed to act through recruitment and/or stabilization of the Ubl-conjugating enzyme (E2) at the E3:substrate complex. This Homo sapiens (Human) protein is Melanoma-associated antigen E1 (MAGEE1).